The following is a 456-amino-acid chain: Protein MGA1 (456 aa).

Residues 3-118 (PKTFVHQLHA…ILNKIQRKST (116 aa)) mediate DNA binding. The segment at 229-299 (SIVQPQQPQQ…QPLPTVPPYS (71 aa)) is disordered. Low complexity-rich tracts occupy residues 231-246 (VQPQQPQQVLSPQALS), 253-267 (SGTLSSTDDLKTTSL), and 283-299 (QQQQQQQQPLPTVPPYS).

This sequence belongs to the HSF family.

It is found in the nucleus. This chain is Protein MGA1 (MGA1), found in Saccharomyces cerevisiae (strain ATCC 204508 / S288c) (Baker's yeast).